An 808-amino-acid polypeptide reads, in one-letter code: MSSGQSFSRSLLKLPLSVMVKGTTIPSNPIDDLNIDLTKPIVYALPFRSNVDLLTLQKQAMSLGLPDPLSPLEINGKTLNRFVFIASRPTVMGNDNDIPTDSVSLFTELLELHKLDSELDVQMIPATVLWGRKPGKEESHRPYLQPMNGPQKAKAVMAAGRDCLVRFSPVVSLRYMADSHGTDSAIAHKLARVARIHFSRQKLAASGPNLPQRQVLFARLLKSPAIEQAIEDEAKSKDISIEKARKEAHDIMDEIAADFSYGLVKNGDRILSWLWTKLYQGLHINNASTVRRLAQDGHEIVYVPCHRSHMDYLLLSYVLYHEGMVPPHIAAGINLNFFPAGPIFRRGGAFFIRRSFKGNKLYSTIFREYLAELFAKGYSVEYFSEGGRSRTGRLLQAKTGMLAMTIQAMLRGLNRPVTLVPVYIGYEHVMEVGTYAKELRGKRKEKENAGLVLRTLRKLRNFGLGYVNFGEPIQLNQYLNEHAPEWTKDIDSMGGSKPQWMNPVVNELANKMMTHINDAAAANALTLCATALLASRQRALSRDSLINQIECYLKLLKNNPYSSTSTIPTESAEELVDHAISLDKFVIETDSMGDIISLDRSQSILMTYYRNNIIHLFALPSLIAQMIIRQRNLTVEKIQENVAQIYPFLKKELFLSYQEEDLNDLVVKTLNEFAEQKMICLDGNKLEINQSNNQPLVLLGRTITETLQRYSIAMNLLVAYPELGKSDLEQKSQDIAQRLGRLHGINAPEFFDKGVFTAMFNTLKQQEYLDSDGNCDKKKTQKFAKLLFTLLYPEVKLTIEESIHQLQA.

The HXXXXD motif signature appears at 306-311; the sequence is HRSHMD.

Belongs to the GPAT/DAPAT family.

It localises to the cell inner membrane. It catalyses the reaction sn-glycerol 3-phosphate + an acyl-CoA = a 1-acyl-sn-glycero-3-phosphate + CoA. Its pathway is phospholipid metabolism; CDP-diacylglycerol biosynthesis; CDP-diacylglycerol from sn-glycerol 3-phosphate: step 1/3. The chain is Glycerol-3-phosphate acyltransferase from Vibrio parahaemolyticus serotype O3:K6 (strain RIMD 2210633).